A 109-amino-acid chain; its full sequence is uncharacterized protein (109 aa).

The segment at 77–98 (TRTGHAYPRFTRPSFPSCNRNG) is disordered.

This is an uncharacterized protein from Homo sapiens (Human).